A 419-amino-acid chain; its full sequence is uncharacterized protein (419 aa).

The region spanning 29–236 (PKFQDKIRIR…KLIELELKTI (208 aa)) is the Obg domain. Positions 237 to 414 (CEIGLVGLPN…LVRGMTQLLQ (178 aa)) constitute an OBG-type G domain. GTP-binding positions include 243-250 (GLPNAGKS), 295-299 (DIPGI), and 364-367 (ANKA).

Belongs to the TRAFAC class OBG-HflX-like GTPase superfamily. OBG GTPase family.

Its subcellular location is the mitochondrion. This is an uncharacterized protein from Schizosaccharomyces pombe (strain 972 / ATCC 24843) (Fission yeast).